The primary structure comprises 299 residues: 4-diphosphocytidyl-2-C-methyl-D-erythritol kinase (299 aa).

The active site involves Lys16. 101–111 (PVAAGIGGGSA) provides a ligand contact to ATP. The active site involves Asp143.

It belongs to the GHMP kinase family. IspE subfamily.

It catalyses the reaction 4-CDP-2-C-methyl-D-erythritol + ATP = 4-CDP-2-C-methyl-D-erythritol 2-phosphate + ADP + H(+). The protein operates within isoprenoid biosynthesis; isopentenyl diphosphate biosynthesis via DXP pathway; isopentenyl diphosphate from 1-deoxy-D-xylulose 5-phosphate: step 3/6. Functionally, catalyzes the phosphorylation of the position 2 hydroxy group of 4-diphosphocytidyl-2C-methyl-D-erythritol. This chain is 4-diphosphocytidyl-2-C-methyl-D-erythritol kinase, found in Rhodopseudomonas palustris (strain ATCC BAA-98 / CGA009).